The chain runs to 206 residues: Small ribosomal subunit protein uS4 (206 aa).

The S4 RNA-binding domain occupies 96–156 (CRLDNVVYRM…EKAKNQLRIV (61 aa)).

It belongs to the universal ribosomal protein uS4 family. Part of the 30S ribosomal subunit. Contacts protein S5. The interaction surface between S4 and S5 is involved in control of translational fidelity.

Functionally, one of the primary rRNA binding proteins, it binds directly to 16S rRNA where it nucleates assembly of the body of the 30S subunit. In terms of biological role, with S5 and S12 plays an important role in translational accuracy. The polypeptide is Small ribosomal subunit protein uS4 (Pseudomonas fluorescens (strain SBW25)).